Here is a 338-residue protein sequence, read N- to C-terminus: Protein SGT1 homolog (338 aa).

Residue Ala-2 is modified to N-acetylalanine. TPR repeat units follow at residues 11 to 45, 46 to 79, and 80 to 113; these read AASR…KPDD, APYY…NPNS, and STAL…NSAD. Residues 142–231 form the CS domain; it reads QSKIKYDWYQ…PEAVRWEKLE (90 aa). The SGS domain maps to 249-338; sequence LYPSSSHYTR…PPDDMEWKKY (90 aa). A Phosphoserine modification is found at Ser-254. Phosphothreonine is present on Thr-257. A Glycyl lysine isopeptide (Lys-Gly) (interchain with G-Cter in SUMO1); alternate cross-link involves residue Lys-268. A Glycyl lysine isopeptide (Lys-Gly) (interchain with G-Cter in SUMO2); alternate cross-link involves residue Lys-268. Ser-304 carries the phosphoserine modification.

This sequence belongs to the SGT1 family. In terms of assembly, probably associates with SCF (SKP1-CUL1-F-box protein) complex through interaction with SKP1. Interacts with S100A6. Interacts with HSP90. In terms of processing, phosphorylated at Ser-254 and Ser-304, dephosphorylation promotes nuclear translocation, most likely due to disruption of the SUGT1-HSP90 complex.

The protein localises to the cytoplasm. It localises to the nucleus. May play a role in ubiquitination and subsequent proteasomal degradation of target proteins. The polypeptide is Protein SGT1 homolog (Bos taurus (Bovine)).